The chain runs to 469 residues: Ribulose bisphosphate carboxylase large chain (469 aa).

Positions 1–2 (MS) are excised as a propeptide. P3 carries the N-acetylproline modification. At K14 the chain carries N6,N6,N6-trimethyllysine. Residues N123 and T173 each coordinate substrate. The Proton acceptor role is filled by K175. K177 contacts substrate. The Mg(2+) site is built by K201, D203, and E204. K201 is subject to N6-carboxylysine. H294 (proton acceptor) is an active-site residue. Substrate contacts are provided by R295, H327, and S379.

This sequence belongs to the RuBisCO large chain family. Type I subfamily. Heterohexadecamer of 8 large chains and 8 small chains; disulfide-linked. The disulfide link is formed within the large subunit homodimers. It depends on Mg(2+) as a cofactor. In terms of processing, the disulfide bond which can form in the large chain dimeric partners within the hexadecamer appears to be associated with oxidative stress and protein turnover.

Its subcellular location is the plastid. It localises to the chloroplast. The catalysed reaction is 2 (2R)-3-phosphoglycerate + 2 H(+) = D-ribulose 1,5-bisphosphate + CO2 + H2O. It carries out the reaction D-ribulose 1,5-bisphosphate + O2 = 2-phosphoglycolate + (2R)-3-phosphoglycerate + 2 H(+). In terms of biological role, ruBisCO catalyzes two reactions: the carboxylation of D-ribulose 1,5-bisphosphate, the primary event in carbon dioxide fixation, as well as the oxidative fragmentation of the pentose substrate in the photorespiration process. Both reactions occur simultaneously and in competition at the same active site. This Brexia madagascariensis protein is Ribulose bisphosphate carboxylase large chain.